Reading from the N-terminus, the 104-residue chain is Small ribosomal subunit protein uS10 (104 aa).

Belongs to the universal ribosomal protein uS10 family. In terms of assembly, part of the 30S ribosomal subunit.

Its function is as follows. Involved in the binding of tRNA to the ribosomes. This chain is Small ribosomal subunit protein uS10, found in Helicobacter pylori (strain J99 / ATCC 700824) (Campylobacter pylori J99).